We begin with the raw amino-acid sequence, 90 residues long: Putative toxin RelE1 (90 aa).

It belongs to the RelE toxin family.

Toxic component of a type II toxin-antitoxin (TA) system. Its cognate antitoxin is RelB1 (Potential). The polypeptide is Putative toxin RelE1 (relE1) (Methanocaldococcus jannaschii (strain ATCC 43067 / DSM 2661 / JAL-1 / JCM 10045 / NBRC 100440) (Methanococcus jannaschii)).